A 201-amino-acid chain; its full sequence is Molybdenum cofactor guanylyltransferase (201 aa).

Residues 14–16 (LAG), K31, and D104 contribute to the GTP site. D104 provides a ligand contact to Mg(2+).

This sequence belongs to the MobA family. In terms of assembly, monomer. Mg(2+) serves as cofactor.

It localises to the cytoplasm. The catalysed reaction is Mo-molybdopterin + GTP + H(+) = Mo-molybdopterin guanine dinucleotide + diphosphate. Its function is as follows. Transfers a GMP moiety from GTP to Mo-molybdopterin (Mo-MPT) cofactor (Moco or molybdenum cofactor) to form Mo-molybdopterin guanine dinucleotide (Mo-MGD) cofactor. The sequence is that of Molybdenum cofactor guanylyltransferase from Helicobacter pylori (strain P12).